The chain runs to 730 residues: Transcription factor verF (730 aa).

Residues 19-41 (YECSLCLKRYKRREHLFRHIGSH) form a C2H2-type 1 zinc finger. Residues 47 to 69 (YQCNSCDGAFQRADVLKRHLRTC) form a C2H2-type 2; atypical zinc finger. A DNA-binding region (zn(2)-C6 fungal-type) is located at residues 83 to 109 (CDRCVRQKKACSSHQPCHSCAKKGAQC). Over residues 120–129 (RLSQHSSTNH) the composition is skewed to polar residues. Residues 120-151 (RLSQHSSTNHTPKDQELSTQFTNPPPPPSTST) are disordered.

The protein localises to the nucleus. In terms of biological role, transcription factor; part of the gene cluster that mediates the biosynthesis of the neurotoxin verrucosidin, a methylated alpha-pyrone polyketide that inhibits oxidative phosphorylation in mitochondria and thereby causes neurological diseases. The chain is Transcription factor verF from Penicillium polonicum.